A 78-amino-acid polypeptide reads, in one-letter code: Short neurotoxin OH-26 (78 aa).

The first 21 residues, 1 to 21 (MKNLLLTFLVVTIVCLDLGYT), serve as a signal peptide directing secretion. Intrachain disulfides connect cysteine 24–cysteine 40, cysteine 33–cysteine 58, cysteine 62–cysteine 70, and cysteine 71–cysteine 76.

Belongs to the three-finger toxin family. Short-chain subfamily. In terms of tissue distribution, expressed by the venom gland.

The protein resides in the secreted. In terms of biological role, this three-finger toxin binds and inhibits the nicotinic acetylcholine receptor (nAChR). The sequence is that of Short neurotoxin OH-26 from Ophiophagus hannah (King cobra).